Reading from the N-terminus, the 390-residue chain is Putative glutamate--cysteine ligase 2 (390 aa).

The protein belongs to the glutamate--cysteine ligase type 2 family. YbdK subfamily.

It carries out the reaction L-cysteine + L-glutamate + ATP = gamma-L-glutamyl-L-cysteine + ADP + phosphate + H(+). ATP-dependent carboxylate-amine ligase which exhibits weak glutamate--cysteine ligase activity. This is Putative glutamate--cysteine ligase 2 from Chloroflexus aurantiacus (strain ATCC 29366 / DSM 635 / J-10-fl).